The sequence spans 302 residues: Endochitinase 4 (302 aa).

Positions 1–18 (EFTALSLLFSLLLLTASA) are cleaved as a signal peptide. Positions 19 to 60 (EQCGKQAGGARCAAGLCCSNFGWCGNTNDYCGPGKCQSQCPS) constitute a Chitin-binding type-1 domain. 4 disulfides stabilise this stretch: Cys-21-Cys-36, Cys-30-Cys-42, Cys-35-Cys-49, and Cys-54-Cys-58. The segment at 59 to 79 (PSGPSPKPPTPGPGPSGGDIG) is disordered. The segment covering 61-72 (GPSPKPPTPGPG) has biased composition (pro residues). Glu-144 serves as the catalytic Proton donor. Residues Cys-162 and Cys-182 are joined by a disulfide bond.

This sequence belongs to the glycosyl hydrolase 19 family. Chitinase class I subfamily.

The protein localises to the vacuole. The enzyme catalyses Random endo-hydrolysis of N-acetyl-beta-D-glucosaminide (1-&gt;4)-beta-linkages in chitin and chitodextrins.. In terms of biological role, defense against chitin-containing fungal pathogens. The protein is Endochitinase 4 (CHTB4) of Solanum tuberosum (Potato).